We begin with the raw amino-acid sequence, 857 residues long: MGETRRHSVDVPITRTLVALRRVRSLRDPCTTSMSKFASLLDNVKWETGSNNGISLQFVEHADDACKAAADAPVGLIPFGSYSIMEELESGCDLHKLSSKVINVEGDACSRSSERSCSDLSVKGRDLACNAPSISHVEEAGSGGRYRTHYSTKLASSVGEYGSRLGSPMNSTNHSYYGDEDVDFDSQSNRGCGITYCWSRTPRYRGSNQSSDVEEYPLLPGNGNGESDVVTPSHEVLSRSLSQKFRPKSFDELVGQEVVVKCLLSTILRGRITSVYLFHGPRGTGKTSTSKIFAAALNCLSQAAHSRPCGLCSECKSYFSGRGRDVMETDSGKLNRPSYLRSLIKSASLPPVSSRFKVFIIDECQLLCQETWGTLLNSLDNFSQHSVFILVTSELEKLPRNVLSRSQKYHFSKVCDADISTKLAKICIEEGIDFDQGAVDFIASKSDGSLRDAEIMLDQLSLLGKRITTSLAYKLIGVVSDDELLDLLDLAMSSDTSNTVIRARELMRSKIDPMQLISQLANVIMDIIAGNSQESSSATRLRFLTRHTSEEEMQKLRNALKILSDAEKHLRASKNQTTWLTVALLQLSNTDSSSFATDENGRNQINKDVELSSTSSGCPGDVIKSDAEKGQERNCNETVESVWKTVTDLCCSDSLKRFLWKRGRLTSLTVDKGVAIAELEFYTPQHVARAEKSWKLIADSFQSVLGCNVEIQMNLVISACSPPKSAKAAASLFFGLFSCSRRMLHKSYLTTRTDSDCASEKPAVTNSLRSCQGNVLRARSVRSSANASSRMSCSSDQGDATSAMCTPHIPPGEKRPEDDTDVLCWKKTPLGKGQSETQNSKSSRLIGRVLPCSTAAN.

Position 280 to 287 (280 to 287 (GPRGTGKT)) interacts with ATP. Zn(2+) is bound by residues Cys-299, Cys-309, Cys-312, and Cys-315. Residues 544–576 (LTRHTSEEEMQKLRNALKILSDAEKHLRASKNQ) adopt a coiled-coil conformation. 2 disordered regions span residues 593–629 (SSFA…DAEK) and 787–845 (ASSR…SSRL). Residues 599-610 (ENGRNQINKDVE) are compositionally biased toward basic and acidic residues. A compositionally biased stretch (polar residues) spans 834 to 843 (QSETQNSKSS).

This sequence belongs to the DnaX/STICHEL family.

This Arabidopsis thaliana (Mouse-ear cress) protein is Protein STICHEL-like 2.